The sequence spans 460 residues: MSLRIYNTLSRALEEFSPLEPGHVRMYVCGMTIYDLCHIGHARMMMAFDVVQRWLKARGLKVTYVRNITDIDDKIIGRALERGITIGALTDEMIAAMHADIGALGLEPPTLEPRATQYVPRMLALIGQLQAKGLAYRASNGDVNYAVRKFQGYGKLSGKSPDELRAGARVALADGKTDPLDFVLWKSAKPHEPPEAQWDSDYGRGRPGWHIECSAMSCATLGESFDIHGGGADLQFPHHENEIAQSEGVTGKPLARFWLHNGFVRVDNEKMSKSLGNFFTIRDVLAQYDAQTVRFFIVRAHYRSALNYSDAHLDDARQALKRLYTALSLVPPAPVAAIDWTEPHAARFQAAMDEDFGTPEAVAVLFDLAVEVNKSHSPQRAGLLKALGGCLGLLQGDPRAFLQAGAGTPDEADIQARIAARAAAKAQRDFAEADRIRNALLAQGIVLKDGATGTTWEAAQ.

Residue cysteine 29 participates in Zn(2+) binding. The short motif at 31–41 is the 'HIGH' region element; the sequence is MTIYDLCHIGH. Residues cysteine 213, histidine 238, and glutamate 242 each contribute to the Zn(2+) site. A 'KMSKS' region motif is present at residues 270–274; it reads KMSKS. Lysine 273 contacts ATP.

This sequence belongs to the class-I aminoacyl-tRNA synthetase family. As to quaternary structure, monomer. Requires Zn(2+) as cofactor.

It localises to the cytoplasm. The enzyme catalyses tRNA(Cys) + L-cysteine + ATP = L-cysteinyl-tRNA(Cys) + AMP + diphosphate. In Verminephrobacter eiseniae (strain EF01-2), this protein is Cysteine--tRNA ligase.